The sequence spans 317 residues: Phosphopantothenate--cysteine ligase 1 (317 aa).

It belongs to the PPC synthetase family. As to quaternary structure, homodimer.

The catalysed reaction is (R)-4'-phosphopantothenate + L-cysteine + ATP = N-[(R)-4-phosphopantothenoyl]-L-cysteine + AMP + diphosphate + H(+). It functions in the pathway cofactor biosynthesis; coenzyme A biosynthesis; CoA from (R)-pantothenate: step 2/5. Functionally, catalyzes the first step in the biosynthesis of coenzyme A from vitamin B5/pantothenate, where cysteine is conjugated to 4'-phosphopantothenate to form 4-phosphopantothenoylcysteine. The catalytic activity is not CTP- but ATP-dependent. This is Phosphopantothenate--cysteine ligase 1 (PPCS1) from Arabidopsis thaliana (Mouse-ear cress).